Consider the following 55-residue polypeptide: ATP synthase protein 8 (55 aa).

Residues 4-24 (LNPNPWFTILIFTWAVFLTIL) form a helical membrane-spanning segment.

It belongs to the ATPase protein 8 family. In terms of assembly, F-type ATPases have 2 components, CF(1) - the catalytic core - and CF(0) - the membrane proton channel.

Its subcellular location is the mitochondrion membrane. Functionally, mitochondrial membrane ATP synthase (F(1)F(0) ATP synthase or Complex V) produces ATP from ADP in the presence of a proton gradient across the membrane which is generated by electron transport complexes of the respiratory chain. F-type ATPases consist of two structural domains, F(1) - containing the extramembraneous catalytic core and F(0) - containing the membrane proton channel, linked together by a central stalk and a peripheral stalk. During catalysis, ATP synthesis in the catalytic domain of F(1) is coupled via a rotary mechanism of the central stalk subunits to proton translocation. Part of the complex F(0) domain. Minor subunit located with subunit a in the membrane. This chain is ATP synthase protein 8 (mt-atp8), found in Polypterus ornatipinnis (Ornate bichir).